Here is a 248-residue protein sequence, read N- to C-terminus: tRNA uridine(34) hydroxylase (248 aa).

Residues T124 to N218 enclose the Rhodanese domain. The active-site Cysteine persulfide intermediate is C178.

This sequence belongs to the TrhO family.

The catalysed reaction is uridine(34) in tRNA + AH2 + O2 = 5-hydroxyuridine(34) in tRNA + A + H2O. In terms of biological role, catalyzes oxygen-dependent 5-hydroxyuridine (ho5U) modification at position 34 in tRNAs. The sequence is that of tRNA uridine(34) hydroxylase from Rickettsia bellii (strain OSU 85-389).